We begin with the raw amino-acid sequence, 382 residues long: Protein arginine N-methyltransferase PRMT10 (382 aa).

Residues 1-21 (MASLPNGAASASAASSAAGGG) are disordered. A compositionally biased stretch (low complexity) spans 7-17 (GAASASAASSA). Residues 28–359 (EVDFANYFCT…KENHRLMDME (332 aa)) form the SAM-dependent MTase PRMT-type domain. Catalysis depends on residues Glu-142 and Glu-151. The dimerization arm stretch occupies residues 189–229 (ENKMEDLEIAMHDWNLFVEDTESYYGVNMNVLTKAYRAEHE).

It belongs to the class I-like SAM-binding methyltransferase superfamily. Protein arginine N-methyltransferase family. Ring-like homodimer.

It carries out the reaction L-arginyl-[protein] + 2 S-adenosyl-L-methionine = N(omega),N(omega)-dimethyl-L-arginyl-[protein] + 2 S-adenosyl-L-homocysteine + 2 H(+). Methylates (mono and asymmetric dimethylation) the guanidino nitrogens of arginyl residues in some proteins. The protein is Protein arginine N-methyltransferase PRMT10 (PRMT10) of Oryza sativa subsp. indica (Rice).